Consider the following 310-residue polypeptide: Protoheme IX farnesyltransferase (310 aa).

The next 9 helical transmembrane spans lie at Val26–Val45, Ile49–Trp71, Gly95–Ala115, Leu118–Trp138, Ile147–Gly167, Leu174–Phe194, Val220–Gly240, Leu243–Trp263, and Leu289–Gly309.

It belongs to the UbiA prenyltransferase family. Protoheme IX farnesyltransferase subfamily. In terms of assembly, interacts with CtaA.

It localises to the cell inner membrane. The enzyme catalyses heme b + (2E,6E)-farnesyl diphosphate + H2O = Fe(II)-heme o + diphosphate. Its pathway is porphyrin-containing compound metabolism; heme O biosynthesis; heme O from protoheme: step 1/1. Converts heme B (protoheme IX) to heme O by substitution of the vinyl group on carbon 2 of heme B porphyrin ring with a hydroxyethyl farnesyl side group. This Cereibacter sphaeroides (strain ATCC 17029 / ATH 2.4.9) (Rhodobacter sphaeroides) protein is Protoheme IX farnesyltransferase.